The following is a 95-amino-acid chain: MALKPLGDRIVVHFEETEEKTASGFVLAGASHEATKTAEVLAVGEGIRTLTGELIALSVAAGDKVLVENGAGVNVKDGDDSVSIIREADILAVLA.

Belongs to the GroES chaperonin family. In terms of assembly, heptamer of 7 subunits arranged in a ring. Interacts with the chaperonin GroEL.

The protein resides in the cytoplasm. Its function is as follows. Together with the chaperonin GroEL, plays an essential role in assisting protein folding. The GroEL-GroES system forms a nano-cage that allows encapsulation of the non-native substrate proteins and provides a physical environment optimized to promote and accelerate protein folding. GroES binds to the apical surface of the GroEL ring, thereby capping the opening of the GroEL channel. The chain is Co-chaperonin GroES from Streptococcus salivarius.